We begin with the raw amino-acid sequence, 515 residues long: N-fatty-acyl-amino acid synthase/hydrolase PM20D1.1 (515 aa).

An N-terminal signal peptide occupies residues 1–34 (MKTKFTKKTVLKFFGILFAILLLSVLILFSVVIG). Residues asparagine 50, asparagine 87, and asparagine 118 are each glycosylated (N-linked (GlcNAc...) asparagine). Histidine 140 is a Zn(2+) binding site. Aspartate 142 is a catalytic residue. Residue aspartate 173 coordinates Zn(2+). The active-site Proton acceptor is glutamate 207. Zn(2+) contacts are provided by glutamate 208, aspartate 234, and histidine 480.

This sequence belongs to the peptidase M20A family. Zn(2+) serves as cofactor.

It localises to the secreted. It carries out the reaction an N-acyl-L-amino acid + H2O = an L-alpha-amino acid + a carboxylate. The enzyme catalyses an N-acyl-aromatic L-alpha-amino acid + H2O = an aromatic L-alpha-amino acid + a carboxylate. The catalysed reaction is N-(5Z,8Z,11Z,14Z)-eicosatetraenoyl-glycine + H2O = (5Z,8Z,11Z,14Z)-eicosatetraenoate + glycine. It catalyses the reaction N-hexadecanoyl-L-phenylalanine + H2O = hexadecanoate + L-phenylalanine. It carries out the reaction N-octadecanoyl-L-phenylalanine + H2O = octadecanoate + L-phenylalanine. The enzyme catalyses N-(4Z,7Z,10Z,13Z,16Z,19Z-docosahexaenoyl)-L-phenylalanine + H2O = (4Z,7Z,10Z,13Z,16Z,19Z)-docosahexaenoate + L-phenylalanine. The catalysed reaction is N-(9Z-octadecenoyl)-L-asparagine + H2O = L-asparagine + (9Z)-octadecenoate. It catalyses the reaction (9Z)-octadecenoate + glycine = N-(9Z-octadecenoyl)glycine + H2O. It carries out the reaction N-(9Z-octadecenoyl)-L-lysine + H2O = L-lysine + (9Z)-octadecenoate. The enzyme catalyses N-(9Z-octadecenoyl)-L-methionine + H2O = (9Z)-octadecenoate + L-methionine. The catalysed reaction is N-(9Z-octadecenoyl)-L-serine + H2O = L-serine + (9Z)-octadecenoate. It catalyses the reaction N-(9Z-octadecenoyl)-L-tryptophan + H2O = L-tryptophan + (9Z)-octadecenoate. It carries out the reaction N-(9Z-octadecenoyl)-L-tyrosine + H2O = L-tyrosine + (9Z)-octadecenoate. The enzyme catalyses N-(9Z-octadecenoyl)-L-glutamine + H2O = L-glutamine + (9Z)-octadecenoate. The catalysed reaction is N-(5Z,8Z,11Z,14Z-eicosatetraenoyl)-L-serine + H2O = (5Z,8Z,11Z,14Z)-eicosatetraenoate + L-serine. It catalyses the reaction (5Z,8Z,11Z,14Z)-eicosatetraenoate + L-phenylalanine = N-(5Z,8Z,11Z,14Z-eicosatetraenoyl)-L-phenylalanine + H2O. It carries out the reaction N-(9Z-octadecenoyl)-L-leucine + H2O = L-leucine + (9Z)-octadecenoate. The enzyme catalyses L-phenylalanine + (9Z)-octadecenoate = N-(9Z-octadecenoyl)-L-phenylalanine + H2O. It functions in the pathway amino-acid metabolism. Its pathway is energy metabolism; electron transfer. It participates in lipid metabolism; fatty acid metabolism. Its activity is regulated as follows. Lipoproteins are powerful coactivators of PM20D1 activity in vitro and NAA biosynthesis in vivo. Its function is as follows. Secreted enzyme that regulates the endogenous N-fatty acyl amino acid (NAAs) tissue and circulating levels by functioning as a bidirectional NAA synthase/hydrolase. It condenses free fatty acids and free amino acids to generate NAAs and bidirectionally catalyzes the reverse hydrolysis reaction. Some of these NAAs stimulate oxidative metabolism via mitochondrial uncoupling, increasing energy expenditure in a UPC1-independent manner. Thereby, this secreted protein may indirectly regulate whole body energy expenditure. PM20D1 circulates in tight association with both low- and high-density (LDL and HDL,respectively) lipoprotein particles. The protein is N-fatty-acyl-amino acid synthase/hydrolase PM20D1.1 of Danio rerio (Zebrafish).